We begin with the raw amino-acid sequence, 63 residues long: Large ribosomal subunit protein uL30 (63 aa).

It belongs to the universal ribosomal protein uL30 family. In terms of assembly, part of the 50S ribosomal subunit.

This Xylella fastidiosa (strain 9a5c) protein is Large ribosomal subunit protein uL30.